Reading from the N-terminus, the 833-residue chain is Copper-exporting P-type ATPase (833 aa).

HMA domains follow at residues Gln-3–Thr-64 and Glu-98–Glu-161. Residues Cys-14, Cys-17, Cys-109, and Cys-112 each contribute to the Cu(+) site. 6 consecutive transmembrane segments (helical) span residues Trp-186–Asp-206, Leu-217–Tyr-237, Thr-253–Pro-273, Leu-283–Ala-303, Ala-437–Phe-457, and Ile-463–Gly-483. The active-site 4-aspartylphosphate intermediate is Asp-522. The Mg(2+) site is built by Asp-719 and Asp-723. 2 helical membrane-spanning segments follow: residues Leu-778–Phe-798 and Gly-800–Val-820.

This sequence belongs to the cation transport ATPase (P-type) (TC 3.A.3) family. Type IB subfamily.

Its subcellular location is the cell inner membrane. The protein localises to the cytoplasm. It carries out the reaction Cu(+)(in) + ATP + H2O = Cu(+)(out) + ADP + phosphate + H(+). In terms of biological role, involved in Cu(+) export. Essential for copper tolerance under both aerobic and anaerobic conditions. Functionally, probably also encodes a cytoplasmic copper chaperone CopA(Z) that is produced by programmed ribosomal frameshifting. The polypeptide is Copper-exporting P-type ATPase (copA) (Salmonella typhimurium (strain LT2 / SGSC1412 / ATCC 700720)).